Consider the following 926-residue polypeptide: Taz1-interacting factor 1 (926 aa).

2 coiled-coil regions span residues 461-496 and 548-671; these read REAV…SHQN and SFTD…LKQK. Ser-548 bears the Phosphoserine mark. The residue at position 550 (Thr-550) is a Phosphothreonine. Ser-552 is subject to Phosphoserine.

It belongs to the ATG11 family. In terms of assembly, homodimer and potential homooligomers. Interacts with taz1.

It localises to the preautophagosomal structure membrane. Its subcellular location is the vacuole membrane. Its function is as follows. Involved in cytoplasm to vacuole transport (Cvt), pexophagy, mitophagy and nucleophagy. Recruits mitochondria for their selective degradation via autophagy (mitophagy) during starvation. Works as scaffold proteins that recruit ATG proteins to the preautophagosome (PAS), the site of vesicle/autophagosome formation. Required for atg9 anterograde transport from the mitochondria to the PAS. Required for nitrogen starvation-induced sexual development and for entering the dormant G0 state. This Schizosaccharomyces pombe (strain 972 / ATCC 24843) (Fission yeast) protein is Taz1-interacting factor 1 (taf1).